We begin with the raw amino-acid sequence, 496 residues long: Putative BTB/POZ domain and WD-repeat protein R61 (496 aa).

One can recognise a BTB domain in the interval 8–78 (SNINLILNDE…MFSDIDIYKN (71 aa)). WD repeat units lie at residues 149–189 (KFPR…FNSK), 208–248 (IFDN…KEFQ), 250–285 (DYKI…RKVL), 291–330 (KSIG…IIKW), 333–371 (VSKS…KILE), and 422–464 (MYFS…DIIY).

Belongs to the mimivirus BTB/WD family.

In Acanthamoeba polyphaga (Amoeba), this protein is Putative BTB/POZ domain and WD-repeat protein R61.